A 262-amino-acid polypeptide reads, in one-letter code: Cytochrome c oxidase subunit 3 (262 aa).

Transmembrane regions (helical) follow at residues Tyr-39 to Trp-59, Gly-83 to Phe-103, Met-120 to Ala-140, Gly-163 to Ile-183, Ala-201 to Leu-221, and Ala-240 to Trp-260.

This sequence belongs to the cytochrome c oxidase subunit 3 family. In terms of assembly, component of the cytochrome c oxidase (complex IV, CIV), a multisubunit enzyme composed of a catalytic core of 3 subunits and several supernumerary subunits. The complex exists as a monomer or a dimer and forms supercomplexes (SCs) in the inner mitochondrial membrane with ubiquinol-cytochrome c oxidoreductase (cytochrome b-c1 complex, complex III, CIII).

It localises to the mitochondrion inner membrane. It carries out the reaction 4 Fe(II)-[cytochrome c] + O2 + 8 H(+)(in) = 4 Fe(III)-[cytochrome c] + 2 H2O + 4 H(+)(out). Functionally, component of the cytochrome c oxidase, the last enzyme in the mitochondrial electron transport chain which drives oxidative phosphorylation. The respiratory chain contains 3 multisubunit complexes succinate dehydrogenase (complex II, CII), ubiquinol-cytochrome c oxidoreductase (cytochrome b-c1 complex, complex III, CIII) and cytochrome c oxidase (complex IV, CIV), that cooperate to transfer electrons derived from NADH and succinate to molecular oxygen, creating an electrochemical gradient over the inner membrane that drives transmembrane transport and the ATP synthase. Cytochrome c oxidase is the component of the respiratory chain that catalyzes the reduction of oxygen to water. Electrons originating from reduced cytochrome c in the intermembrane space (IMS) are transferred via the dinuclear copper A center (CU(A)) of subunit 2 and heme A of subunit 1 to the active site in subunit 1, a binuclear center (BNC) formed by heme A3 and copper B (CU(B)). The BNC reduces molecular oxygen to 2 water molecules using 4 electrons from cytochrome c in the IMS and 4 protons from the mitochondrial matrix. The chain is Cytochrome c oxidase subunit 3 (mt:CoIII) from Drosophila yakuba (Fruit fly).